The primary structure comprises 350 residues: Anthranilate phosphoribosyltransferase (350 aa).

Residues Gly-93, 96–97 (GD), Thr-101, 103–106 (NIST), 121–129 (KHGNRSASG), and Ser-133 each bind 5-phospho-alpha-D-ribose 1-diphosphate. Position 93 (Gly-93) interacts with anthranilate. Mg(2+) is bound at residue Ser-105. Asn-124 contributes to the anthranilate binding site. Residue Arg-179 participates in anthranilate binding. Mg(2+) contacts are provided by Asp-238 and Glu-239.

This sequence belongs to the anthranilate phosphoribosyltransferase family. In terms of assembly, homodimer. Requires Mg(2+) as cofactor.

The catalysed reaction is N-(5-phospho-beta-D-ribosyl)anthranilate + diphosphate = 5-phospho-alpha-D-ribose 1-diphosphate + anthranilate. Its pathway is amino-acid biosynthesis; L-tryptophan biosynthesis; L-tryptophan from chorismate: step 2/5. Functionally, catalyzes the transfer of the phosphoribosyl group of 5-phosphorylribose-1-pyrophosphate (PRPP) to anthranilate to yield N-(5'-phosphoribosyl)-anthranilate (PRA). The sequence is that of Anthranilate phosphoribosyltransferase from Parasynechococcus marenigrum (strain WH8102).